The following is a 346-amino-acid chain: Biotin synthase (346 aa).

Residues 38–256 enclose the Radical SAM core domain; it reads RQVQVSTLLS…IAVARIMMPT (219 aa). [4Fe-4S] cluster-binding residues include C53, C57, and C60. 4 residues coordinate [2Fe-2S] cluster: C97, C128, C188, and R260.

It belongs to the radical SAM superfamily. Biotin synthase family. In terms of assembly, homodimer. The cofactor is [4Fe-4S] cluster. It depends on [2Fe-2S] cluster as a cofactor.

The enzyme catalyses (4R,5S)-dethiobiotin + (sulfur carrier)-SH + 2 reduced [2Fe-2S]-[ferredoxin] + 2 S-adenosyl-L-methionine = (sulfur carrier)-H + biotin + 2 5'-deoxyadenosine + 2 L-methionine + 2 oxidized [2Fe-2S]-[ferredoxin]. Its pathway is cofactor biosynthesis; biotin biosynthesis; biotin from 7,8-diaminononanoate: step 2/2. Functionally, catalyzes the conversion of dethiobiotin (DTB) to biotin by the insertion of a sulfur atom into dethiobiotin via a radical-based mechanism. The polypeptide is Biotin synthase (Escherichia coli (strain SE11)).